A 293-amino-acid polypeptide reads, in one-letter code: Proline iminopeptidase (293 aa).

One can recognise an AB hydrolase-1 domain in the interval 28–277 (KPLVLLHGGP…FSRHMPFVEE (250 aa)). Catalysis depends on S104, which acts as the Nucleophile. D244 is an active-site residue. H271 (proton donor) is an active-site residue.

It belongs to the peptidase S33 family.

It carries out the reaction Release of N-terminal proline from a peptide.. Its function is as follows. Releases the N-terminal proline from various substrates. The protein is Proline iminopeptidase of Clostridium botulinum (strain Hall / ATCC 3502 / NCTC 13319 / Type A).